The primary structure comprises 491 residues: Cytochrome P450 2F5 (491 aa).

Cysteine 436 lines the heme pocket.

The protein belongs to the cytochrome P450 family. It depends on heme as a cofactor.

It localises to the endoplasmic reticulum membrane. Its subcellular location is the microsome membrane. The catalysed reaction is an organic molecule + reduced [NADPH--hemoprotein reductase] + O2 = an alcohol + oxidized [NADPH--hemoprotein reductase] + H2O + H(+). Cytochromes P450 are a group of heme-thiolate monooxygenases. In liver microsomes, this enzyme is involved in an NADPH-dependent electron transport pathway. It oxidizes a variety of structurally unrelated compounds, including steroids, fatty acids, and xenobiotics. The polypeptide is Cytochrome P450 2F5 (CYP2F5) (Gorilla gorilla gorilla (Western lowland gorilla)).